We begin with the raw amino-acid sequence, 357 residues long: S-adenosylmethionine decarboxylase proenzyme (357 aa).

Active-site residues include E11 and E14. S71 serves as the catalytic Schiff-base intermediate with substrate; via pyruvic acid. S71 is modified (pyruvic acid (Ser); by autocatalysis). C85 acts as the Proton donor; for catalytic activity in catalysis. Residues S234 and H247 each act as proton acceptor; for processing activity in the active site.

The protein belongs to the eukaryotic AdoMetDC family. Requires pyruvate as cofactor. Is synthesized initially as an inactive proenzyme. Formation of the active enzyme involves a self-maturation process in which the active site pyruvoyl group is generated from an internal serine residue via an autocatalytic post-translational modification. Two non-identical subunits are generated from the proenzyme in this reaction, and the pyruvate is formed at the N-terminus of the alpha chain, which is derived from the carboxyl end of the proenzyme. The post-translation cleavage follows an unusual pathway, termed non-hydrolytic serinolysis, in which the side chain hydroxyl group of the serine supplies its oxygen atom to form the C-terminus of the beta chain, while the remainder of the serine residue undergoes an oxidative deamination to produce ammonia and the pyruvoyl group blocking the N-terminus of the alpha chain.

It catalyses the reaction S-adenosyl-L-methionine + H(+) = S-adenosyl 3-(methylsulfanyl)propylamine + CO2. It participates in amine and polyamine biosynthesis; S-adenosylmethioninamine biosynthesis; S-adenosylmethioninamine from S-adenosyl-L-methionine: step 1/1. This Catharanthus roseus (Madagascar periwinkle) protein is S-adenosylmethionine decarboxylase proenzyme (SAMDC).